The sequence spans 429 residues: Glutamyl-tRNA reductase (429 aa).

Residues 56 to 59 (TCNR), Ser-119, 124 to 126 (EPQ), and Gln-130 contribute to the substrate site. Cys-57 acts as the Nucleophile in catalysis. NADP(+) is bound at residue 199–204 (GAGEMI).

This sequence belongs to the glutamyl-tRNA reductase family. In terms of assembly, homodimer.

It catalyses the reaction (S)-4-amino-5-oxopentanoate + tRNA(Glu) + NADP(+) = L-glutamyl-tRNA(Glu) + NADPH + H(+). Its pathway is porphyrin-containing compound metabolism; protoporphyrin-IX biosynthesis; 5-aminolevulinate from L-glutamyl-tRNA(Glu): step 1/2. Catalyzes the NADPH-dependent reduction of glutamyl-tRNA(Glu) to glutamate 1-semialdehyde (GSA). This Janthinobacterium sp. (strain Marseille) (Minibacterium massiliensis) protein is Glutamyl-tRNA reductase.